Here is a 613-residue protein sequence, read N- to C-terminus: Dihydroxy-acid dehydratase (613 aa).

D81 serves as a coordination point for Mg(2+). C122 contributes to the [2Fe-2S] cluster binding site. Mg(2+) contacts are provided by D123 and K124. The residue at position 124 (K124) is an N6-carboxylysine. C193 serves as a coordination point for [2Fe-2S] cluster. Mg(2+) is bound at residue E489. The active-site Proton acceptor is S515.

This sequence belongs to the IlvD/Edd family. In terms of assembly, homodimer. Requires [2Fe-2S] cluster as cofactor. It depends on Mg(2+) as a cofactor.

It carries out the reaction (2R)-2,3-dihydroxy-3-methylbutanoate = 3-methyl-2-oxobutanoate + H2O. It catalyses the reaction (2R,3R)-2,3-dihydroxy-3-methylpentanoate = (S)-3-methyl-2-oxopentanoate + H2O. It participates in amino-acid biosynthesis; L-isoleucine biosynthesis; L-isoleucine from 2-oxobutanoate: step 3/4. The protein operates within amino-acid biosynthesis; L-valine biosynthesis; L-valine from pyruvate: step 3/4. Its function is as follows. Functions in the biosynthesis of branched-chain amino acids. Catalyzes the dehydration of (2R,3R)-2,3-dihydroxy-3-methylpentanoate (2,3-dihydroxy-3-methylvalerate) into 2-oxo-3-methylpentanoate (2-oxo-3-methylvalerate) and of (2R)-2,3-dihydroxy-3-methylbutanoate (2,3-dihydroxyisovalerate) into 2-oxo-3-methylbutanoate (2-oxoisovalerate), the penultimate precursor to L-isoleucine and L-valine, respectively. This chain is Dihydroxy-acid dehydratase, found in Pseudomonas putida (strain GB-1).